Consider the following 565-residue polypeptide: Phosphomethylpyrimidine synthase (565 aa).

Residues N203, M232, Y261, H297, 317 to 319 (SRG), 358 to 361 (DGLR), and E397 contribute to the substrate site. H401 provides a ligand contact to Zn(2+). Y424 provides a ligand contact to substrate. H465 is a Zn(2+) binding site. [4Fe-4S] cluster-binding residues include C541, C544, and C549.

It belongs to the ThiC family. The cofactor is [4Fe-4S] cluster.

The enzyme catalyses 5-amino-1-(5-phospho-beta-D-ribosyl)imidazole + S-adenosyl-L-methionine = 4-amino-2-methyl-5-(phosphooxymethyl)pyrimidine + CO + 5'-deoxyadenosine + formate + L-methionine + 3 H(+). It functions in the pathway cofactor biosynthesis; thiamine diphosphate biosynthesis. Its function is as follows. Catalyzes the synthesis of the hydroxymethylpyrimidine phosphate (HMP-P) moiety of thiamine from aminoimidazole ribotide (AIR) in a radical S-adenosyl-L-methionine (SAM)-dependent reaction. This Bacteroides thetaiotaomicron (strain ATCC 29148 / DSM 2079 / JCM 5827 / CCUG 10774 / NCTC 10582 / VPI-5482 / E50) protein is Phosphomethylpyrimidine synthase.